The chain runs to 31 residues: Photosystem II reaction center protein T (31 aa).

A helical membrane pass occupies residues 3-23 (ALVYTFLLIGTLGIIFFAIFF).

Belongs to the PsbT family. PSII is composed of 1 copy each of membrane proteins PsbA, PsbB, PsbC, PsbD, PsbE, PsbF, PsbH, PsbI, PsbJ, PsbK, PsbL, PsbM, PsbT, PsbY, PsbZ, Psb30/Ycf12, at least 3 peripheral proteins of the oxygen-evolving complex and a large number of cofactors. It forms dimeric complexes.

The protein localises to the plastid. The protein resides in the chloroplast thylakoid membrane. Found at the monomer-monomer interface of the photosystem II (PS II) dimer, plays a role in assembly and dimerization of PSII. PSII is a light-driven water plastoquinone oxidoreductase, using light energy to abstract electrons from H(2)O, generating a proton gradient subsequently used for ATP formation. The chain is Photosystem II reaction center protein T from Tetradesmus obliquus (Green alga).